The chain runs to 162 residues: Cyclic pyranopterin monophosphate synthase (162 aa).

Substrate-binding positions include Leu79–His81 and Met117–Glu118. Residue Asp132 is part of the active site.

This sequence belongs to the MoaC family. As to quaternary structure, homohexamer; trimer of dimers.

It catalyses the reaction (8S)-3',8-cyclo-7,8-dihydroguanosine 5'-triphosphate = cyclic pyranopterin phosphate + diphosphate. The protein operates within cofactor biosynthesis; molybdopterin biosynthesis. Its function is as follows. Catalyzes the conversion of (8S)-3',8-cyclo-7,8-dihydroguanosine 5'-triphosphate to cyclic pyranopterin monophosphate (cPMP). This is Cyclic pyranopterin monophosphate synthase from Bordetella petrii (strain ATCC BAA-461 / DSM 12804 / CCUG 43448).